Here is a 204-residue protein sequence, read N- to C-terminus: Thymidylate kinase (204 aa).

11 to 18 contributes to the ATP binding site; it reads GLDKSGKT.

This sequence belongs to the thymidylate kinase family.

The enzyme catalyses dTMP + ATP = dTDP + ADP. Its pathway is pyrimidine metabolism; dTTP biosynthesis. This Rabbitpox virus (strain Utrecht) (RPV) protein is Thymidylate kinase (TMK).